Consider the following 132-residue polypeptide: Small ribosomal subunit protein uS8 (132 aa).

Belongs to the universal ribosomal protein uS8 family. As to quaternary structure, part of the 30S ribosomal subunit. Contacts proteins S5 and S12.

Functionally, one of the primary rRNA binding proteins, it binds directly to 16S rRNA central domain where it helps coordinate assembly of the platform of the 30S subunit. This Corynebacterium jeikeium (strain K411) protein is Small ribosomal subunit protein uS8.